The sequence spans 184 residues: Probable RNA 2'-phosphotransferase (184 aa).

The protein belongs to the KptA/TPT1 family.

Removes the 2'-phosphate from RNA via an intermediate in which the phosphate is ADP-ribosylated by NAD followed by a presumed transesterification to release the RNA and generate ADP-ribose 1''-2''-cyclic phosphate (APPR&gt;P). May function as an ADP-ribosylase. In Escherichia coli (strain 55989 / EAEC), this protein is Probable RNA 2'-phosphotransferase.